We begin with the raw amino-acid sequence, 20 residues long: Hemocyanin subunit 6 (20 aa).

It belongs to the tyrosinase family. Hemocyanin subfamily. As to expression, hemolymph.

It localises to the secreted. The protein resides in the extracellular space. Functionally, hemocyanins are copper-containing oxygen carriers occurring freely dissolved in the hemolymph of many mollusks and arthropods. In Homarus americanus (American lobster), this protein is Hemocyanin subunit 6.